We begin with the raw amino-acid sequence, 221 residues long: MDSEAAGVALLSREQIIRILSEVPAGFIKPTDPPAPSLAPFKKLGVLVDIDDILGEQDAAAARIRDNIDKEQSYSCVECRKMLPTAHLLDLHITEQHDCYFAASVERGDKPMFSCFLEECTIKFHTARQRKDHCIITHKLPANYRFDHSKNRGKQKHQGKSKPNSMEVDEVIEETKSLPYVKAFSFGHQTQRSFYTGKDQRSGKTLDDVQAMKEAINDILD.

2 consecutive C2H2-type zinc fingers follow at residues 74-97 (YSCV…TEQH) and 113-138 (FSCF…IITH). The disordered stretch occupies residues 146 to 168 (FDHSKNRGKQKHQGKSKPNSMEV). Residues 151–160 (NRGKQKHQGK) show a composition bias toward basic residues.

Its function is as follows. Vital for development. The protein is Protein lethal(2)k10201 (l(2)k10201) of Drosophila melanogaster (Fruit fly).